The sequence spans 349 residues: Insulin gene enhancer protein ISL-1 (349 aa).

LIM zinc-binding domains lie at 17-70 and 79-133; these read CVGC…CKRD and CAKC…RADH. A DNA-binding region (homeobox) is located at residues 181-240; the sequence is TTRVRTVLNEKQLHTLRTCYAANPRPDALMKEQLVEMTGLSPRVIRVWFQNKRCKDKKRS. The disordered stretch occupies residues 312–349; the sequence is VNFSEGGPGSNSTGSEVASMSSQLPDTPNSMVASPIEA. Polar residues predominate over residues 321–343; sequence SNSTGSEVASMSSQLPDTPNSMV.

The protein resides in the nucleus. Acts as a transcriptional regulator. Recognizes and binds to the consensus octamer binding site 5'-ATAATTAA-3' in promoter of target genes. Plays a fundamental role in the gene regulatory network essential for retinal ganglion cell (RGC) differentiation. Binds to insulin gene enhancer sequences. Defines subclasses of motoneurons that segregate into columns in the spinal cord and select distinct axon pathways. Acts in conjunction with LHX1, LHX3 and ISL2. Binds to insulin gene enhancer sequences. Essential for heart development. This Gallus gallus (Chicken) protein is Insulin gene enhancer protein ISL-1 (ISL1).